Consider the following 153-residue polypeptide: ORM1-like protein 2 (153 aa).

Topologically, residues 1-21 (MNVGVAHSEVNPNTRVMSSRG) are cytoplasmic. 2 helical membrane-spanning segments follow: residues 22-42 (IWLAYVISVAALHVILLSIPF) and 43-63 (FSIPVVWTLTNVIHNLVMYLL). The Cytoplasmic segment spans residues 64 to 105 (LHTVKGTPFETPDQGKDRLLTHWEQIDYGMQCTSSRKFLSIS). A helical transmembrane segment spans residues 106-126 (PVVLYLLTSFYIKYDPAHFMI). The Extracellular segment spans residues 127–153 (NTASLLSVLLPKLPQFHGVRVFGINKY).

This sequence belongs to the ORM family. As to quaternary structure, ceramide-sensitive subunit of the serine palmitoyltransferase (SPT) complex, which is also composed of SPTLC1, SPTLC2/3 and SPTSSA/B.

It is found in the endoplasmic reticulum membrane. Plays an essential role in the homeostatic regulation of sphingolipid de novo biosynthesis by modulating the activity of the serine palmitoyltransferase (SPT) in response to ceramide levels. When complexed to SPT, the binding of ceramides to its N-terminus stabilizes a conformation that block SPT substrate entry, hence preventing SPT catalytic activity. Through this mechanism, maintains ceramide levels at sufficient concentrations for the production of complex sphingolipids, but which prevents the accumulation of ceramides to levels that trigger apoptosis. The sequence is that of ORM1-like protein 2 (ORMDL2) from Gallus gallus (Chicken).